A 502-amino-acid chain; its full sequence is Glycerol kinase (502 aa).

T14 is an ADP binding site. Positions 14, 15, and 16 each coordinate ATP. Residue T14 participates in sn-glycerol 3-phosphate binding. Residue R18 coordinates ADP. Residues R84, E85, Y136, and D246 each coordinate sn-glycerol 3-phosphate. Residues R84, E85, Y136, D246, and Q247 each contribute to the glycerol site. Positions 268 and 311 each coordinate ADP. T268, G311, Q315, and G412 together coordinate ATP. The ADP site is built by G412 and N416.

The protein belongs to the FGGY kinase family. Homotetramer and homodimer (in equilibrium). Heterodimer with EIIA-Glc. Binds 1 zinc ion per glycerol kinase EIIA-Glc dimer. The zinc ion is important for dimerization.

It catalyses the reaction glycerol + ATP = sn-glycerol 3-phosphate + ADP + H(+). It participates in polyol metabolism; glycerol degradation via glycerol kinase pathway; sn-glycerol 3-phosphate from glycerol: step 1/1. Activity of this regulatory enzyme is affected by several metabolites. Allosterically and non-competitively inhibited by fructose 1,6-bisphosphate (FBP) and unphosphorylated phosphocarrier protein EIIA-Glc (III-Glc), an integral component of the bacterial phosphotransferase (PTS) system. Its function is as follows. Key enzyme in the regulation of glycerol uptake and metabolism. Catalyzes the phosphorylation of glycerol to yield sn-glycerol 3-phosphate. The sequence is that of Glycerol kinase from Shigella dysenteriae serotype 1 (strain Sd197).